The sequence spans 183 residues: Acireductone dioxygenase (183 aa).

Residues His95, His97, Glu101, and His139 each coordinate Fe(2+). His95, His97, Glu101, and His139 together coordinate Ni(2+).

It belongs to the acireductone dioxygenase (ARD) family. As to quaternary structure, monomer. Requires Fe(2+) as cofactor. Ni(2+) serves as cofactor.

The catalysed reaction is 1,2-dihydroxy-5-(methylsulfanyl)pent-1-en-3-one + O2 = 3-(methylsulfanyl)propanoate + CO + formate + 2 H(+). It carries out the reaction 1,2-dihydroxy-5-(methylsulfanyl)pent-1-en-3-one + O2 = 4-methylsulfanyl-2-oxobutanoate + formate + 2 H(+). Its pathway is amino-acid biosynthesis; L-methionine biosynthesis via salvage pathway; L-methionine from S-methyl-5-thio-alpha-D-ribose 1-phosphate: step 5/6. Its function is as follows. Catalyzes 2 different reactions between oxygen and the acireductone 1,2-dihydroxy-3-keto-5-methylthiopentene (DHK-MTPene) depending upon the metal bound in the active site. Fe-containing acireductone dioxygenase (Fe-ARD) produces formate and 2-keto-4-methylthiobutyrate (KMTB), the alpha-ketoacid precursor of methionine in the methionine recycle pathway. Ni-containing acireductone dioxygenase (Ni-ARD) produces methylthiopropionate, carbon monoxide and formate, and does not lie on the methionine recycle pathway. This Aquifex aeolicus (strain VF5) protein is Acireductone dioxygenase.